Consider the following 402-residue polypeptide: Acetylornithine aminotransferase (402 aa).

Pyridoxal 5'-phosphate is bound by residues 117–118 (GA) and Phe-143. Arg-146 contributes to the N(2)-acetyl-L-ornithine binding site. 231–234 (DEVQ) provides a ligand contact to pyridoxal 5'-phosphate. An N6-(pyridoxal phosphate)lysine modification is found at Lys-260. Residue Thr-288 coordinates N(2)-acetyl-L-ornithine. Thr-289 is a pyridoxal 5'-phosphate binding site.

The protein belongs to the class-III pyridoxal-phosphate-dependent aminotransferase family. ArgD subfamily. As to quaternary structure, homodimer. The cofactor is pyridoxal 5'-phosphate.

It localises to the cytoplasm. It carries out the reaction N(2)-acetyl-L-ornithine + 2-oxoglutarate = N-acetyl-L-glutamate 5-semialdehyde + L-glutamate. Its pathway is amino-acid biosynthesis; L-arginine biosynthesis; N(2)-acetyl-L-ornithine from L-glutamate: step 4/4. This is Acetylornithine aminotransferase from Corynebacterium efficiens (strain DSM 44549 / YS-314 / AJ 12310 / JCM 11189 / NBRC 100395).